The chain runs to 255 residues: Wtf element wtf15 (255 aa).

Residues 19–78 form a disordered region; the sequence is KAGHEIDLEGSPPSEHNSEEKSTLPSNSDILTSANPVSQASETPDHSIESNTGSTQSPTS. 2 stretches are compositionally biased toward polar residues: residues 41 to 60 and 67 to 78; these read TLPS…QASE and ESNTGSTQSPTS. The next 4 membrane-spanning stretches (helical) occupy residues 85–105, 112–132, 162–182, and 187–208; these read FSFC…CVLP, FLIA…SGSI, FLKT…LVLL, and WGWK…SFCL.

Belongs to the WTF family.

The protein resides in the spore membrane. May act in meiotic drive. The polypeptide is Wtf element wtf15 (Schizosaccharomyces pombe (strain 972 / ATCC 24843) (Fission yeast)).